We begin with the raw amino-acid sequence, 285 residues long: Eukaryotic translation initiation factor 3 subunit J (285 aa).

2 disordered regions span residues 1 to 86 (MSWD…QLDE) and 232 to 285 (QARL…DDFM). Acidic residues predominate over residues 22–41 (WEDEEDDGPVLESWDVDPEE). Residues 36–81 (DVDPEEEEKKKKEAKLQEAKRKAELKAKEDAEKAKKDAKRKELEQF) adopt a coiled-coil conformation. The segment covering 42–86 (EEKKKKEAKLQEAKRKAELKAKEDAEKAKKDAKRKELEQFDQLDE) has biased composition (basic and acidic residues). Residues 269 to 285 (DDMDDGQFDDLDDDDFM) are compositionally biased toward acidic residues.

This sequence belongs to the eIF-3 subunit J family. Component of the eukaryotic translation initiation factor 3 (eIF-3) complex.

The protein resides in the cytoplasm. In terms of biological role, component of the eukaryotic translation initiation factor 3 (eIF-3) complex, which is involved in protein synthesis of a specialized repertoire of mRNAs and, together with other initiation factors, stimulates binding of mRNA and methionyl-tRNAi to the 40S ribosome. The eIF-3 complex specifically targets and initiates translation of a subset of mRNAs involved in cell proliferation. The protein is Eukaryotic translation initiation factor 3 subunit J of Candida albicans (strain SC5314 / ATCC MYA-2876) (Yeast).